The following is a 279-amino-acid chain: Tryptophan synthase alpha chain (279 aa).

Active-site proton acceptor residues include Glu-50 and Asp-61.

The protein belongs to the TrpA family. Tetramer of two alpha and two beta chains.

It catalyses the reaction (1S,2R)-1-C-(indol-3-yl)glycerol 3-phosphate + L-serine = D-glyceraldehyde 3-phosphate + L-tryptophan + H2O. It functions in the pathway amino-acid biosynthesis; L-tryptophan biosynthesis; L-tryptophan from chorismate: step 5/5. Functionally, the alpha subunit is responsible for the aldol cleavage of indoleglycerol phosphate to indole and glyceraldehyde 3-phosphate. This is Tryptophan synthase alpha chain from Sinorhizobium medicae (strain WSM419) (Ensifer medicae).